The chain runs to 282 residues: Bifunctional protein FolD (282 aa).

Residues N165 to S167, S190, and I231 contribute to the NADP(+) site.

Belongs to the tetrahydrofolate dehydrogenase/cyclohydrolase family. As to quaternary structure, homodimer.

The enzyme catalyses (6R)-5,10-methylene-5,6,7,8-tetrahydrofolate + NADP(+) = (6R)-5,10-methenyltetrahydrofolate + NADPH. It catalyses the reaction (6R)-5,10-methenyltetrahydrofolate + H2O = (6R)-10-formyltetrahydrofolate + H(+). It participates in one-carbon metabolism; tetrahydrofolate interconversion. In terms of biological role, catalyzes the oxidation of 5,10-methylenetetrahydrofolate to 5,10-methenyltetrahydrofolate and then the hydrolysis of 5,10-methenyltetrahydrofolate to 10-formyltetrahydrofolate. The polypeptide is Bifunctional protein FolD (Clostridium botulinum (strain ATCC 19397 / Type A)).